The chain runs to 356 residues: Protein-glutamate methylesterase/protein-glutamine glutaminase 2 (356 aa).

The Response regulatory domain occupies 7–124 (KVLCVDDSAL…RDGLMEYTDT (118 aa)). Aspartate 58 carries the post-translational modification 4-aspartylphosphate. The CheB-type methylesterase domain occupies 157–349 (LLSTEKLIIL…QRVMARLATY (193 aa)). Residues serine 169, histidine 195, and aspartate 291 contribute to the active site.

It belongs to the CheB family. Post-translationally, phosphorylated by CheA. Phosphorylation of the N-terminal regulatory domain activates the methylesterase activity.

It localises to the cytoplasm. The enzyme catalyses [protein]-L-glutamate 5-O-methyl ester + H2O = L-glutamyl-[protein] + methanol + H(+). It carries out the reaction L-glutaminyl-[protein] + H2O = L-glutamyl-[protein] + NH4(+). Functionally, involved in chemotaxis. Part of a chemotaxis signal transduction system that modulates chemotaxis in response to various stimuli. Catalyzes the demethylation of specific methylglutamate residues introduced into the chemoreceptors (methyl-accepting chemotaxis proteins or MCP) by CheR. Also mediates the irreversible deamidation of specific glutamine residues to glutamic acid. The chain is Protein-glutamate methylesterase/protein-glutamine glutaminase 2 from Cupriavidus pinatubonensis (strain JMP 134 / LMG 1197) (Cupriavidus necator (strain JMP 134)).